The chain runs to 22 residues: Caerin-3.5 (22 aa).

At K22 the chain carries Lysine amide.

Expressed by the skin dorsal glands.

The protein resides in the secreted. Shows significant activity against Gram-positive organisms, but is less effective against Gram-negative organisms. The polypeptide is Caerin-3.5 (Ranoidea gracilenta (Dainty green tree frog)).